Reading from the N-terminus, the 102-residue chain is Flagellar hook-basal body complex protein FliE (102 aa).

Belongs to the FliE family.

The protein localises to the bacterial flagellum basal body. This is Flagellar hook-basal body complex protein FliE from Oceanobacillus iheyensis (strain DSM 14371 / CIP 107618 / JCM 11309 / KCTC 3954 / HTE831).